Reading from the N-terminus, the 269-residue chain is Ribonuclease HII (269 aa).

The RNase H type-2 domain maps to 28–222 (RHVAGADEAG…VSGRRGAPPR (195 aa)). 3 residues coordinate a divalent metal cation: D34, E35, and D128.

It belongs to the RNase HII family. It depends on Mn(2+) as a cofactor. Mg(2+) is required as a cofactor.

It is found in the cytoplasm. It carries out the reaction Endonucleolytic cleavage to 5'-phosphomonoester.. Its function is as follows. Endonuclease that specifically degrades the RNA of RNA-DNA hybrids. The polypeptide is Ribonuclease HII (Salinispora arenicola (strain CNS-205)).